The primary structure comprises 375 residues: MSSLNLDDFSDLIERPDGGVRRDAEARRERQIVPPGSLGRLDDLGEWLAAAQSAVPVRPVERPRVVLFAGDHGVASLGVSARPAGSADQLVRAVLEGASPASILARRLNVPVRVVDMALDCEPDALPESVVRHRVRRGSGRIDVEDALTLEEAEAAFRAGVAVADEEADAGTDLVVLGDVSVGGTTAAAVLIAALCGTDASVVTGRGGLAIDDLAWMRKCAAVRDALRRARPVLGDQLQLLAAVGGADLAAMTGFLLQSAARKTPVILDGVVSAACALVGQRIAFRAPDWWLAGQNSGEPAQAKALDRMALEPLLNHGVTVGEGAGALLALPLVQAAAALAAELPEKPEELEAGEGPEAAEESSPEPENPEALAE.

The active-site Proton acceptor is the Glu323. The tract at residues 344–375 is disordered; the sequence is LPEKPEELEAGEGPEAAEESSPEPENPEALAE. Residues 351 to 375 show a composition bias toward acidic residues; it reads LEAGEGPEAAEESSPEPENPEALAE.

The protein belongs to the CobT family.

The catalysed reaction is 5,6-dimethylbenzimidazole + nicotinate beta-D-ribonucleotide = alpha-ribazole 5'-phosphate + nicotinate + H(+). Its pathway is nucleoside biosynthesis; alpha-ribazole biosynthesis; alpha-ribazole from 5,6-dimethylbenzimidazole: step 1/2. Functionally, catalyzes the synthesis of alpha-ribazole-5'-phosphate from nicotinate mononucleotide (NAMN) and 5,6-dimethylbenzimidazole (DMB). This chain is Nicotinate-nucleotide--dimethylbenzimidazole phosphoribosyltransferase, found in Streptomyces avermitilis (strain ATCC 31267 / DSM 46492 / JCM 5070 / NBRC 14893 / NCIMB 12804 / NRRL 8165 / MA-4680).